The sequence spans 292 residues: Ribosomal RNA small subunit methyltransferase A (292 aa).

Residues asparagine 29, leucine 31, glycine 56, glutamate 77, aspartate 102, and asparagine 127 each coordinate S-adenosyl-L-methionine.

It belongs to the class I-like SAM-binding methyltransferase superfamily. rRNA adenine N(6)-methyltransferase family. RsmA subfamily.

The protein localises to the cytoplasm. It catalyses the reaction adenosine(1518)/adenosine(1519) in 16S rRNA + 4 S-adenosyl-L-methionine = N(6)-dimethyladenosine(1518)/N(6)-dimethyladenosine(1519) in 16S rRNA + 4 S-adenosyl-L-homocysteine + 4 H(+). Functionally, specifically dimethylates two adjacent adenosines (A1518 and A1519) in the loop of a conserved hairpin near the 3'-end of 16S rRNA in the 30S particle. May play a critical role in biogenesis of 30S subunits. The sequence is that of Ribosomal RNA small subunit methyltransferase A from Bacillus licheniformis (strain ATCC 14580 / DSM 13 / JCM 2505 / CCUG 7422 / NBRC 12200 / NCIMB 9375 / NCTC 10341 / NRRL NRS-1264 / Gibson 46).